The chain runs to 276 residues: NH(3)-dependent NAD(+) synthetase (276 aa).

39–46 (GLSGGVDS) serves as a coordination point for ATP. Asp-45 serves as a coordination point for Mg(2+). Arg-123 contacts deamido-NAD(+). Thr-143 is an ATP binding site. Glu-148 lines the Mg(2+) pocket. Residues Lys-156 and Asp-163 each coordinate deamido-NAD(+). Residues Lys-172 and Ser-194 each coordinate ATP. 254–255 (HK) contacts deamido-NAD(+).

It belongs to the NAD synthetase family. As to quaternary structure, homodimer.

The catalysed reaction is deamido-NAD(+) + NH4(+) + ATP = AMP + diphosphate + NAD(+) + H(+). Its pathway is cofactor biosynthesis; NAD(+) biosynthesis; NAD(+) from deamido-NAD(+) (ammonia route): step 1/1. Functionally, catalyzes the ATP-dependent amidation of deamido-NAD to form NAD. Uses ammonia as a nitrogen source. The polypeptide is NH(3)-dependent NAD(+) synthetase (Hyperthermus butylicus (strain DSM 5456 / JCM 9403 / PLM1-5)).